The chain runs to 440 residues: Xaa-Pro dipeptidase (440 aa).

Mn(2+) is bound by residues Asp-244, Asp-255, His-336, Glu-381, and Glu-420.

The protein belongs to the peptidase M24B family. Bacterial-type prolidase subfamily. Mn(2+) is required as a cofactor.

It carries out the reaction Xaa-L-Pro dipeptide + H2O = an L-alpha-amino acid + L-proline. Its function is as follows. Splits dipeptides with a prolyl residue in the C-terminal position. This Pseudoalteromonas translucida (strain TAC 125) protein is Xaa-Pro dipeptidase.